The following is a 186-amino-acid chain: Putative 5'(3')-deoxyribonucleotidase (186 aa).

Asp-6 acts as the Nucleophile in catalysis. Mg(2+) contacts are provided by Asp-6, Asp-8, and Asp-137. Residue Asp-8 is the Proton donor of the active site.

Belongs to the 5'(3')-deoxyribonucleotidase family. The cofactor is Mg(2+).

Dephosphorylates the 5' and 2'(3')-phosphates of deoxyribonucleotides. The polypeptide is Putative 5'(3')-deoxyribonucleotidase (Bordetella pertussis (strain Tohama I / ATCC BAA-589 / NCTC 13251)).